The following is a 900-amino-acid chain: Translation initiation factor IF-2 (900 aa).

Over residues 80–95 the composition is skewed to basic and acidic residues; the sequence is LEEQSRKTVEKEDQLR. Disordered stretches follow at residues 80-106, 149-169, and 221-268; these read LEEQSRKTVEKEDQLRDTLQPSPVPGR, AVEAEPEVAPPSLEAEEDSPV, and DEFD…VDEK. Over residues 253–262 the composition is skewed to basic residues; the sequence is GKKKGKKKKK. In terms of domain architecture, tr-type G spans 397 to 567; it reads TRPPVVTIMG…LTEAEVRELK (171 aa). The tract at residues 406 to 413 is G1; it reads GHVDHGKT. 406 to 413 provides a ligand contact to GTP; that stretch reads GHVDHGKT. Residues 431–435 form a G2 region; the sequence is GITQH. The G3 stretch occupies residues 453–456; sequence DTPG. GTP-binding positions include 453 to 457 and 507 to 510; these read DTPGH and NKID. Positions 507–510 are G4; sequence NKID. The interval 543 to 545 is G5; that stretch reads SAK.

The protein belongs to the TRAFAC class translation factor GTPase superfamily. Classic translation factor GTPase family. IF-2 subfamily.

It localises to the cytoplasm. Functionally, one of the essential components for the initiation of protein synthesis. Protects formylmethionyl-tRNA from spontaneous hydrolysis and promotes its binding to the 30S ribosomal subunits. Also involved in the hydrolysis of GTP during the formation of the 70S ribosomal complex. The sequence is that of Translation initiation factor IF-2 from Chlorobium phaeovibrioides (strain DSM 265 / 1930) (Prosthecochloris vibrioformis (strain DSM 265)).